Reading from the N-terminus, the 754-residue chain is 5-methyltetrahydropteroyltriglutamate--homocysteine methyltransferase (754 aa).

5-methyltetrahydropteroyltri-L-glutamate contacts are provided by residues 15 to 18 (RELK) and lysine 114. Residues 430 to 432 (IGS) and glutamate 483 each bind L-homocysteine. L-methionine is bound by residues 430–432 (IGS) and glutamate 483. Residues 514-515 (RC) and tryptophan 560 each bind 5-methyltetrahydropteroyltri-L-glutamate. Residue aspartate 598 coordinates L-homocysteine. Aspartate 598 contacts L-methionine. Glutamate 604 provides a ligand contact to 5-methyltetrahydropteroyltri-L-glutamate. Residues histidine 641, cysteine 643, and glutamate 665 each contribute to the Zn(2+) site. The Proton donor role is filled by histidine 694. Residue cysteine 726 coordinates Zn(2+).

It belongs to the vitamin-B12 independent methionine synthase family. The cofactor is Zn(2+).

It catalyses the reaction 5-methyltetrahydropteroyltri-L-glutamate + L-homocysteine = tetrahydropteroyltri-L-glutamate + L-methionine. It functions in the pathway amino-acid biosynthesis; L-methionine biosynthesis via de novo pathway; L-methionine from L-homocysteine (MetE route): step 1/1. Functionally, catalyzes the transfer of a methyl group from 5-methyltetrahydrofolate to homocysteine resulting in methionine formation. The sequence is that of 5-methyltetrahydropteroyltriglutamate--homocysteine methyltransferase from Campylobacter jejuni subsp. jejuni serotype O:2 (strain ATCC 700819 / NCTC 11168).